The chain runs to 161 residues: Crossover junction endodeoxyribonuclease RuvC (161 aa).

Residues aspartate 8, glutamate 67, and aspartate 139 contribute to the active site. Aspartate 8, glutamate 67, and aspartate 139 together coordinate Mg(2+).

Belongs to the RuvC family. In terms of assembly, homodimer which binds Holliday junction (HJ) DNA. The HJ becomes 2-fold symmetrical on binding to RuvC with unstacked arms; it has a different conformation from HJ DNA in complex with RuvA. In the full resolvosome a probable DNA-RuvA(4)-RuvB(12)-RuvC(2) complex forms which resolves the HJ. Mg(2+) serves as cofactor.

The protein localises to the cytoplasm. It carries out the reaction Endonucleolytic cleavage at a junction such as a reciprocal single-stranded crossover between two homologous DNA duplexes (Holliday junction).. Functionally, the RuvA-RuvB-RuvC complex processes Holliday junction (HJ) DNA during genetic recombination and DNA repair. Endonuclease that resolves HJ intermediates. Cleaves cruciform DNA by making single-stranded nicks across the HJ at symmetrical positions within the homologous arms, yielding a 5'-phosphate and a 3'-hydroxyl group; requires a central core of homology in the junction. The consensus cleavage sequence is 5'-(A/T)TT(C/G)-3'. Cleavage occurs on the 3'-side of the TT dinucleotide at the point of strand exchange. HJ branch migration catalyzed by RuvA-RuvB allows RuvC to scan DNA until it finds its consensus sequence, where it cleaves and resolves the cruciform DNA. The chain is Crossover junction endodeoxyribonuclease RuvC from Wigglesworthia glossinidia brevipalpis.